The following is a 391-amino-acid chain: Dual-specificity RNA methyltransferase RlmN (391 aa).

Residue glutamate 115 is the Proton acceptor of the active site. The 243-residue stretch at 121 to 363 folds into the Radical SAM core domain; sequence EENRGTLCIS…SPIRTPRGED (243 aa). Cysteine 128 and cysteine 368 are disulfide-bonded. [4Fe-4S] cluster-binding residues include cysteine 135, cysteine 139, and cysteine 142. S-adenosyl-L-methionine-binding positions include 194–195, serine 226, 248–250, and asparagine 325; these read GE and SFH. Cysteine 368 acts as the S-methylcysteine intermediate in catalysis.

The protein belongs to the radical SAM superfamily. RlmN family. [4Fe-4S] cluster serves as cofactor.

Its subcellular location is the cytoplasm. The catalysed reaction is adenosine(2503) in 23S rRNA + 2 reduced [2Fe-2S]-[ferredoxin] + 2 S-adenosyl-L-methionine = 2-methyladenosine(2503) in 23S rRNA + 5'-deoxyadenosine + L-methionine + 2 oxidized [2Fe-2S]-[ferredoxin] + S-adenosyl-L-homocysteine. It carries out the reaction adenosine(37) in tRNA + 2 reduced [2Fe-2S]-[ferredoxin] + 2 S-adenosyl-L-methionine = 2-methyladenosine(37) in tRNA + 5'-deoxyadenosine + L-methionine + 2 oxidized [2Fe-2S]-[ferredoxin] + S-adenosyl-L-homocysteine. Specifically methylates position 2 of adenine 2503 in 23S rRNA and position 2 of adenine 37 in tRNAs. m2A2503 modification seems to play a crucial role in the proofreading step occurring at the peptidyl transferase center and thus would serve to optimize ribosomal fidelity. The protein is Dual-specificity RNA methyltransferase RlmN of Paracoccus denitrificans (strain Pd 1222).